Here is a 489-residue protein sequence, read N- to C-terminus: Cytochrome P450 2C41 (489 aa).

A heme-binding site is contributed by Cys434.

The protein belongs to the cytochrome P450 family. The cofactor is heme.

Its subcellular location is the endoplasmic reticulum membrane. It is found in the microsome membrane. It carries out the reaction an organic molecule + reduced [NADPH--hemoprotein reductase] + O2 = an alcohol + oxidized [NADPH--hemoprotein reductase] + H2O + H(+). Functionally, cytochromes P450 are a group of heme-thiolate monooxygenases. In liver microsomes, this enzyme is involved in an NADPH-dependent electron transport pathway. It oxidizes a variety of structurally unrelated compounds, including steroids, fatty acids, and xenobiotics. This Canis lupus familiaris (Dog) protein is Cytochrome P450 2C41 (CYP2C41).